Here is a 1389-residue protein sequence, read N- to C-terminus: DNA-directed RNA polymerase subunit beta'' (1389 aa).

Residues C224, C295, C302, and C305 each contribute to the Zn(2+) site.

Belongs to the RNA polymerase beta' chain family. RpoC2 subfamily. In plastids the minimal PEP RNA polymerase catalytic core is composed of four subunits: alpha, beta, beta', and beta''. When a (nuclear-encoded) sigma factor is associated with the core the holoenzyme is formed, which can initiate transcription. Requires Zn(2+) as cofactor.

It is found in the plastid. The protein localises to the chloroplast. The catalysed reaction is RNA(n) + a ribonucleoside 5'-triphosphate = RNA(n+1) + diphosphate. DNA-dependent RNA polymerase catalyzes the transcription of DNA into RNA using the four ribonucleoside triphosphates as substrates. This chain is DNA-directed RNA polymerase subunit beta'', found in Atropa belladonna (Belladonna).